A 318-amino-acid polypeptide reads, in one-letter code: tRNA U34 carboxymethyltransferase (318 aa).

Residues lysine 88, tryptophan 102, lysine 107, glycine 126, 176 to 177, methionine 192, tyrosine 196, and arginine 311 contribute to the carboxy-S-adenosyl-L-methionine site; that span reads LE.

It belongs to the class I-like SAM-binding methyltransferase superfamily. CmoB family. Homotetramer.

It carries out the reaction carboxy-S-adenosyl-L-methionine + 5-hydroxyuridine(34) in tRNA = 5-carboxymethoxyuridine(34) in tRNA + S-adenosyl-L-homocysteine + H(+). In terms of biological role, catalyzes carboxymethyl transfer from carboxy-S-adenosyl-L-methionine (Cx-SAM) to 5-hydroxyuridine (ho5U) to form 5-carboxymethoxyuridine (cmo5U) at position 34 in tRNAs. This Pseudomonas putida (strain GB-1) protein is tRNA U34 carboxymethyltransferase.